The primary structure comprises 161 residues: MDHRTSIAQAMVDRISKQMDGSQPDEYFNNLYGNVSRQTYKFEEIREFPYVAVHIGTETGQYLPSGQQWMFLELPILVYDKEKTDIQEQLEKLVADIKTVIDTGGNLEYTVSKPNGSTFPCEATDMIITSVSTDEGLLAPYGLAEINVTVRYQPPRRSLRR.

As to quaternary structure, homohexamer.

It is found in the virion. In terms of biological role, plays an essential role in tail assembly by capping the rapidly polymerizing tail once it has reached its requisite length. The polypeptide is Tail tube terminator protein p142 (Escherichia phage T5 (Enterobacteria phage T5)).